The sequence spans 581 residues: Proline--tRNA ligase (581 aa).

Belongs to the class-II aminoacyl-tRNA synthetase family. ProS type 1 subfamily. As to quaternary structure, homodimer.

The protein localises to the cytoplasm. It carries out the reaction tRNA(Pro) + L-proline + ATP = L-prolyl-tRNA(Pro) + AMP + diphosphate. Catalyzes the attachment of proline to tRNA(Pro) in a two-step reaction: proline is first activated by ATP to form Pro-AMP and then transferred to the acceptor end of tRNA(Pro). As ProRS can inadvertently accommodate and process non-cognate amino acids such as alanine and cysteine, to avoid such errors it has two additional distinct editing activities against alanine. One activity is designated as 'pretransfer' editing and involves the tRNA(Pro)-independent hydrolysis of activated Ala-AMP. The other activity is designated 'posttransfer' editing and involves deacylation of mischarged Ala-tRNA(Pro). The misacylated Cys-tRNA(Pro) is not edited by ProRS. The chain is Proline--tRNA ligase from Blochmanniella floridana.